The following is a 406-amino-acid chain: Type II secretion system protein F (406 aa).

The Cytoplasmic segment spans residues 1 to 171 (MAAFEYKALD…KMRSKLQQAM (171 aa)). Ca(2+) contacts are provided by glutamate 97, glutamate 151, and aspartate 155. Residues 172-192 (IYPVVLVVFAVGIVAFLLAAV) traverse the membrane as a helical segment. Residues 193-223 (VPKIVGQFVQMGQALPASTQFLLDASDFLQH) are Periplasmic-facing. The helical transmembrane segment at 224 to 244 (WGISLLVGLLMLIYLVRWLLT) threads the bilayer. Topologically, residues 245–368 (KPDIRLRWDR…QDNSFESTVN (124 aa)) are cytoplasmic. A helical transmembrane segment spans residues 369–389 (IALGIFTPALIALMAGMVLFI). The Periplasmic portion of the chain corresponds to 390 to 406 (VMATLMPILEMNNLMSR).

This sequence belongs to the GSP F family. As to quaternary structure, type II secretion system is composed of four main components: the outer membrane complex, the inner membrane complex, the cytoplasmic secretion ATPase and the periplasm-spanning pseudopilus. Homodimer. Interacts with EpsE/GspE and EpsL/GspL components.

The protein resides in the cell inner membrane. In terms of biological role, component of the type II secretion system inner membrane complex required for the energy-dependent secretion of extracellular factors such as proteases and toxins from the periplasm. This Vibrio cholerae serotype O1 (strain ATCC 39315 / El Tor Inaba N16961) protein is Type II secretion system protein F (epsF).